We begin with the raw amino-acid sequence, 185 residues long: MIDEILRDAEQRMKKSIELLRQELAGIRAGRAAPSLLEHLEVNYYGTPTPLNQLATISAPEARLLVVQVWDRNAVSAVEKAIRQSELGLNPSVDGQTLRIQLPPLTEERRRQLVKLVHEEVEETKVAIRNIRRDALADIKELLKNKEISEDDERRAEQRLQDLTNRYIAEADKLGKQKEHDILEI.

The protein belongs to the RRF family.

The protein localises to the cytoplasm. In terms of biological role, responsible for the release of ribosomes from messenger RNA at the termination of protein biosynthesis. May increase the efficiency of translation by recycling ribosomes from one round of translation to another. In Thermomicrobium roseum (strain ATCC 27502 / DSM 5159 / P-2), this protein is Ribosome-recycling factor.